The following is a 235-amino-acid chain: Orotidine 5'-phosphate decarboxylase (235 aa).

Substrate is bound by residues D16, K38, 65-74 (DLKLHDIGNT), T120, R181, Q190, G210, and R211. Catalysis depends on K67, which acts as the Proton donor.

This sequence belongs to the OMP decarboxylase family. Type 1 subfamily. Homodimer.

It carries out the reaction orotidine 5'-phosphate + H(+) = UMP + CO2. Its pathway is pyrimidine metabolism; UMP biosynthesis via de novo pathway; UMP from orotate: step 2/2. In terms of biological role, catalyzes the decarboxylation of orotidine 5'-monophosphate (OMP) to uridine 5'-monophosphate (UMP). This chain is Orotidine 5'-phosphate decarboxylase, found in Rhodopseudomonas palustris (strain BisA53).